Here is a 388-residue protein sequence, read N- to C-terminus: Dauer abnormal formation protein 25 (388 aa).

3 ANK repeats span residues Ser-40–Asp-69, Thr-74–Leu-103, and Ile-107–Glu-137. Zn(2+)-binding residues include Cys-321, Cys-324, Cys-333, Cys-336, Cys-341, Cys-345, His-353, and Cys-357. The MYND-type zinc finger occupies Cys-321–Cys-357.

In terms of tissue distribution, expressed in many ciliated sensory neurons.

It localises to the cell projection. The protein resides in the cilium. In terms of biological role, may be involved in the trafficking and dendritic transport of signaling proteins, such as the receptor-type guanylate cyclases gcy-12 and daf-11, to the cilia. In ciliated sensory neurons, required for the calcium flux to the cytoplasm in response to onset and removal of a nitric oxide (NO) stimulus and is thereby required for the behavioral avoidance response to NO-producing organisms like P.aeruginosa. In Caenorhabditis elegans, this protein is Dauer abnormal formation protein 25 (daf-25).